Here is a 129-residue protein sequence, read N- to C-terminus: Small ribosomal subunit protein uS13 (129 aa).

The segment at 96 to 129 is disordered; it reads GLPVRGQRTSTNARTRKGPRKTVGVSKAAAAAKA.

It belongs to the universal ribosomal protein uS13 family. Part of the 30S ribosomal subunit. Forms a loose heterodimer with protein S19. Forms two bridges to the 50S subunit in the 70S ribosome.

Its function is as follows. Located at the top of the head of the 30S subunit, it contacts several helices of the 16S rRNA. In the 70S ribosome it contacts the 23S rRNA (bridge B1a) and protein L5 of the 50S subunit (bridge B1b), connecting the 2 subunits; these bridges are implicated in subunit movement. Contacts the tRNAs in the A and P-sites. The protein is Small ribosomal subunit protein uS13 of Opitutus terrae (strain DSM 11246 / JCM 15787 / PB90-1).